Reading from the N-terminus, the 968-residue chain is Glycine dehydrogenase (decarboxylating) (968 aa).

Residue Lys-712 is modified to N6-(pyridoxal phosphate)lysine.

The protein belongs to the GcvP family. In terms of assembly, the glycine cleavage system is composed of four proteins: P, T, L and H. Requires pyridoxal 5'-phosphate as cofactor.

It catalyses the reaction N(6)-[(R)-lipoyl]-L-lysyl-[glycine-cleavage complex H protein] + glycine + H(+) = N(6)-[(R)-S(8)-aminomethyldihydrolipoyl]-L-lysyl-[glycine-cleavage complex H protein] + CO2. The glycine cleavage system catalyzes the degradation of glycine. The P protein binds the alpha-amino group of glycine through its pyridoxal phosphate cofactor; CO(2) is released and the remaining methylamine moiety is then transferred to the lipoamide cofactor of the H protein. The protein is Glycine dehydrogenase (decarboxylating) of Prochlorococcus marinus (strain NATL2A).